Here is a 499-residue protein sequence, read N- to C-terminus: Cobyric acid synthase (499 aa).

In terms of domain architecture, GATase cobBQ-type spans 246 to 441 (PIDIAIIKLP…IHGIFDGAEL (196 aa)). Cys327 functions as the Nucleophile in the catalytic mechanism. His433 is an active-site residue.

It belongs to the CobB/CobQ family. CobQ subfamily.

It functions in the pathway cofactor biosynthesis; adenosylcobalamin biosynthesis. In terms of biological role, catalyzes amidations at positions B, D, E, and G on adenosylcobyrinic A,C-diamide. NH(2) groups are provided by glutamine, and one molecule of ATP is hydrogenolyzed for each amidation. The chain is Cobyric acid synthase from Clostridium kluyveri (strain NBRC 12016).